The primary structure comprises 341 residues: HTH-type transcriptional repressor PurR (341 aa).

Residues 2-56 (ATIKDVAKRAGVSTTTVSHVINKTRFVAEETKAAVRAAIKELHYSPSAVARSLKV) form the HTH lacI-type domain. Positions 4–23 (IKDVAKRAGVSTTTVSHVIN) form a DNA-binding region, H-T-H motif. The DNA-binding element occupies 48 to 56 (SAVARSLKV). Hypoxanthine contacts are provided by Tyr73, Arg190, Thr192, Phe221, and Asp275.

Homodimer.

The protein operates within purine metabolism; purine nucleotide biosynthesis [regulation]. Functionally, is the main repressor of the genes involved in the de novo synthesis of purine nucleotides, regulating purB, purC, purEK, purF, purHD, purL, purMN and guaBA expression. PurR is allosterically activated to bind its cognate DNA by binding the purine corepressors, hypoxanthine or guanine, thereby effecting transcription repression. This is HTH-type transcriptional repressor PurR from Pectobacterium carotovorum subsp. carotovorum (strain PC1).